Consider the following 156-residue polypeptide: Ribosomal RNA large subunit methyltransferase H (156 aa).

S-adenosyl-L-methionine is bound by residues leucine 72, glycine 103, and 122–127 (LSSLTL).

It belongs to the RNA methyltransferase RlmH family. As to quaternary structure, homodimer.

The protein resides in the cytoplasm. It catalyses the reaction pseudouridine(1915) in 23S rRNA + S-adenosyl-L-methionine = N(3)-methylpseudouridine(1915) in 23S rRNA + S-adenosyl-L-homocysteine + H(+). Its function is as follows. Specifically methylates the pseudouridine at position 1915 (m3Psi1915) in 23S rRNA. This chain is Ribosomal RNA large subunit methyltransferase H, found in Dechloromonas aromatica (strain RCB).